Reading from the N-terminus, the 239-residue chain is tRNA (guanine-N(1)-)-methyltransferase (239 aa).

Residues glycine 108 and 127 to 132 (LGDYVL) contribute to the S-adenosyl-L-methionine site.

This sequence belongs to the RNA methyltransferase TrmD family. As to quaternary structure, homodimer.

Its subcellular location is the cytoplasm. The enzyme catalyses guanosine(37) in tRNA + S-adenosyl-L-methionine = N(1)-methylguanosine(37) in tRNA + S-adenosyl-L-homocysteine + H(+). Specifically methylates guanosine-37 in various tRNAs. The chain is tRNA (guanine-N(1)-)-methyltransferase from Streptococcus pneumoniae (strain P1031).